We begin with the raw amino-acid sequence, 452 residues long: Caspase-2 (452 aa).

Ala-2 carries the post-translational modification N-acetylalanine. Residues 2–169 constitute a propeptide that is removed on maturation; sequence AASSGRSQSS…TMEHSLDNGD (168 aa). The CARD domain maps to 32-121; that stretch reads MHPDHQETLK…GHLEDLLLTT (90 aa). Ser-157 is modified (phosphoserine). Catalysis depends on residues His-277 and Cys-320. A propeptide spanning residues 326 to 333 is cleaved from the precursor; the sequence is DRGVDQQD. The span at 327–336 shows a compositional bias: basic and acidic residues; sequence RGVDQQDGKN. The disordered stretch occupies residues 327 to 349; that stretch reads RGVDQQDGKNHAQSPGCEESDAG. Ser-340 carries the post-translational modification Phosphoserine.

The protein belongs to the peptidase C14A family. In terms of assembly, heterotetramer that consists of two anti-parallel arranged heterodimers, each one formed by a p18 subunit and a p12 subunit. Forms a complex named the PIDDosome with PIDD1 and CRADD. Interacts with NOL3 (via CARD domain); inhibits CASP2 activity in a phosphorylation-dependent manner. In terms of processing, the mature protease can process its own propeptide, but not that of other caspases.

The catalysed reaction is Strict requirement for an Asp residue at P1, with 316-Asp being essential for proteolytic activity and has a preferred cleavage sequence of Val-Asp-Val-Ala-Asp-|-.. In terms of biological role, involved in the activation cascade of caspases responsible for apoptosis execution. Might function by either activating some proteins required for cell death or inactivating proteins necessary for cell survival. Associates with PIDD1 and CRADD to form the PIDDosome, a complex that activates CASP2 and triggers apoptosis in response to genotoxic stress. The sequence is that of Caspase-2 (Casp2) from Rattus norvegicus (Rat).